The following is a 192-amino-acid chain: uncharacterized protein (192 aa).

A Nudix hydrolase domain is found at 29–160; it reads QRQAAVLIPV…PLDVYRRGNS (132 aa). Residues 67 to 89 carry the Nudix box motif; the sequence is GAVDSTDASLIAAALREAQEEVA. Positions 83 and 87 each coordinate Mg(2+).

The protein belongs to the Nudix hydrolase family. PCD1 subfamily. Mn(2+) is required as a cofactor. It depends on Mg(2+) as a cofactor.

In terms of biological role, probably mediates the hydrolysis of some nucleoside diphosphate derivatives. This is an uncharacterized protein from Salmonella agona (strain SL483).